A 99-amino-acid polypeptide reads, in one-letter code: Large ribosomal subunit protein eL21 (99 aa).

The span at 1–18 shows a compositional bias: basic residues; the sequence is MVKHSRGNRTRSRKLLKK. The tract at residues 1-26 is disordered; that stretch reads MVKHSRGNRTRSRKLLKKSPRERGAV.

It belongs to the eukaryotic ribosomal protein eL21 family.

This Metallosphaera sedula (strain ATCC 51363 / DSM 5348 / JCM 9185 / NBRC 15509 / TH2) protein is Large ribosomal subunit protein eL21.